The sequence spans 448 residues: Adenylosuccinate synthetase (448 aa).

GTP-binding positions include 22 to 28 (GDEGKGK) and 50 to 52 (GHT). D23 functions as the Proton acceptor in the catalytic mechanism. The Mg(2+) site is built by D23 and G50. Residues 23 to 26 (DEGK), 48 to 51 (NAGH), T139, R153, Q234, T249, and R321 contribute to the IMP site. H51 serves as the catalytic Proton donor. Residue 317-323 (SVTGRPR) coordinates substrate. GTP contacts are provided by residues R323, 349–351 (KLD), and 431–433 (STG).

Belongs to the adenylosuccinate synthetase family. In terms of assembly, homodimer. The cofactor is Mg(2+).

Its subcellular location is the cytoplasm. It catalyses the reaction IMP + L-aspartate + GTP = N(6)-(1,2-dicarboxyethyl)-AMP + GDP + phosphate + 2 H(+). It functions in the pathway purine metabolism; AMP biosynthesis via de novo pathway; AMP from IMP: step 1/2. Plays an important role in the de novo pathway of purine nucleotide biosynthesis. Catalyzes the first committed step in the biosynthesis of AMP from IMP. The protein is Adenylosuccinate synthetase of Paraburkholderia xenovorans (strain LB400).